A 507-amino-acid chain; its full sequence is Maturase K (507 aa).

The protein belongs to the intron maturase 2 family. MatK subfamily.

Its subcellular location is the plastid. The protein resides in the chloroplast. Its function is as follows. Usually encoded in the trnK tRNA gene intron. Probably assists in splicing its own and other chloroplast group II introns. The polypeptide is Maturase K (Liriodendron chinense (Chinese tulip tree)).